The primary structure comprises 556 residues: uncharacterized protein (556 aa).

Disordered stretches follow at residues 1-40 (MSNSDKNNNNNTNNNNNNNNNNNGNFGIWEEPDDDSTNEN), 80-243 (NTTQ…KQSW), 278-324 (YDSD…SSLP), 363-391 (RTKQIKKVQQQQQQSSKSKPNNNNNKFVD), and 422-525 (DSKQ…ENSA). Residues 7 to 25 (NNNNNTNNNNNNNNNNNGN) show a composition bias toward low complexity. The segment covering 30-40 (EEPDDDSTNEN) has biased composition (acidic residues). Composition is skewed to low complexity over residues 80-133 (NTTQ…GTRS) and 164-181 (NDNNDNKNNNKNNNNDSN). The span at 182–192 (IVDDDEDEEEF) shows a compositional bias: acidic residues. The segment covering 207-226 (STSSPSSTSSPIVSPQTQTS) has biased composition (low complexity). Over residues 227–243 (KLESSMDVSPSSGKQSW) the composition is skewed to polar residues. Low complexity-rich tracts occupy residues 292–322 (NNSSTTTNNNNNNNNNTTTTTTTTTTTNSSS), 369–388 (KVQQQQQQSSKSKPNNNNNK), and 425–525 (QQNV…ENSA). Residues 528–548 (GSFIKNAVIFIFILLLMVVGF) form a helical membrane-spanning segment.

It localises to the membrane. This is an uncharacterized protein from Dictyostelium discoideum (Social amoeba).